The following is a 150-amino-acid chain: Transcriptional repressor NrdR (150 aa).

The segment at 3-34 (CPFCNFEESKVVDSRATDDNTTIRRRRECLNC) is a zinc-finger region. The ATP-cone domain maps to 49-139 (VLVVKKDLAR…VYRQFKDINT (91 aa)).

Belongs to the NrdR family. It depends on Zn(2+) as a cofactor.

Functionally, negatively regulates transcription of bacterial ribonucleotide reductase nrd genes and operons by binding to NrdR-boxes. This Clostridium botulinum (strain Eklund 17B / Type B) protein is Transcriptional repressor NrdR.